The chain runs to 638 residues: Epithelial sodium channel subunit beta (638 aa).

Over 1–50 (MPVKKYLLKCLHRLQKGPGYTYKELLVWYCNNTNTHGPKRIICEGPKKKA) the chain is Cytoplasmic. Residues 51 to 71 (MWFLLTLLFACLVCWQWGVFI) form a helical membrane-spanning segment. At 72–530 (QTYLSWEVSV…GGQFGFWMGG (459 aa)) the chain is on the extracellular side. Intrachain disulfides connect Cys-98–Cys-270, Cys-182–Cys-187, Cys-194–Cys-201, Cys-247–Cys-254, Cys-359–Cys-446, Cys-384–Cys-442, Cys-388–Cys-438, Cys-397–Cys-424, and Cys-399–Cys-413. Residues Asn-135 and Asn-141 are each glycosylated (N-linked (GlcNAc...) asparagine). A helical transmembrane segment spans residues 531 to 551 (SVLCLIEFGEIIIDFIWITVI). Residues 552 to 638 (KLVASCKGLR…MESDSEVEAI (87 aa)) lie on the Cytoplasmic side of the membrane. A disordered region spans residues 598 to 620 (NAEVYPDQQTLPIPGTPPPNYDS). Residues 614–618 (PPPNY) carry the PY motif; recruits WW domain-containing proteins and is thereby required for ubiquitination and inhibition of the channel by NEDD4 and NEDD4L motif. Ser-631 and Ser-633 each carry phosphoserine.

Belongs to the amiloride-sensitive sodium channel (TC 1.A.6) family. SCNN1B subfamily. As to quaternary structure, component of the heterotrimeric epithelial sodium channel (ENaC) composed of an alpha/SCNN1A, a beta/SCNN1B and a gamma/SCNN1G subunit. Interacts with WWP1 (via WW domains). Interacts with WWP2 (via WW domains). Interacts with the full-length immature form of PCSK9 (pro-PCSK9). Interacts (N-glycosylated) with BPIFA1; the interaction is direct and inhibits the proteolytic processing of SCNN1A and SCNN1G and the activation of ENaC. Ubiquitinated. Can be ubiquitinated at multiple sites and undergo monoubiquitination and polyubiquitination. Ubiquitination by NEDD4 or NEDD4L inhibits the ENaC channel through endocytosis, intracellular retention and degradation of its individual subunits. However, some studies could not confirm the ubiquitination of this subunit of the ENaC. In terms of processing, N-glycosylated. N-glycosylation is required for interaction with BPIFA1. Post-translationally, phosphorylated on serine and threonine residues. Aldosterone and insulin increase the basal level of phosphorylation. In terms of tissue distribution, expressed in lung and epididymis. In the caput region of the epididymis, expressed at the luminal and basolateral surfaces of the ducts and in the smooth muscle coat. In the caudal region of the epididymis, expressed along the luminal border but not continuously, in the smooth muscle coat, in the interstitial muscle tissue and in sperm in the caudal lumen.

Its subcellular location is the apical cell membrane. The protein localises to the cytoplasmic vesicle membrane. The enzyme catalyses Na(+)(in) = Na(+)(out). With respect to regulation, originally identified and characterized by its inhibition by the diuretic drug amiloride. Its function is as follows. This is one of the three pore-forming subunits of the heterotrimeric epithelial sodium channel (ENaC), a critical regulator of sodium balance and fluid homeostasis. ENaC operates in epithelial tissues, where it mediates the electrodiffusion of sodium ions from extracellular fluid through the apical membrane of cells, with water following osmotically. It plays a key role in maintaining sodium homeostasis through electrogenic sodium reabsorption in the kidneys. This subunit is not essential for ENaC function in airway surface liquid homeostasis and proper mucus clearance. This is Epithelial sodium channel subunit beta from Rattus norvegicus (Rat).